A 49-amino-acid polypeptide reads, in one-letter code: Sperm protamine P1 (49 aa).

This sequence belongs to the protamine P1 family. Testis.

It localises to the nucleus. Its subcellular location is the chromosome. Protamines substitute for histones in the chromatin of sperm during the haploid phase of spermatogenesis. They compact sperm DNA into a highly condensed, stable and inactive complex. This Pteropus hypomelanus (Island flying fox) protein is Sperm protamine P1 (PRM1).